A 56-amino-acid polypeptide reads, in one-letter code: Small ribosomal subunit protein uS14 (56 aa).

Zn(2+) is bound by residues Cys-21, Cys-24, Cys-39, and Cys-42.

It belongs to the universal ribosomal protein uS14 family. Zinc-binding uS14 subfamily. Part of the 30S ribosomal subunit. The cofactor is Zn(2+).

Its function is as follows. Binds 16S rRNA, required for the assembly of 30S particles. This chain is Small ribosomal subunit protein uS14, found in Methanospirillum hungatei JF-1 (strain ATCC 27890 / DSM 864 / NBRC 100397 / JF-1).